Here is a 132-residue protein sequence, read N- to C-terminus: MVMTDPIADMLTRIRNANMVRHEKLEVPASKIKREIAEILKREGFIRDYEYIEDNKQGILRIFLKYGPNNERVITGLKRISKPGLRVYVKAHEVPRVLNGLGIAILSTSQGILTDKEARQKGTGGEVIAYVW.

This sequence belongs to the universal ribosomal protein uS8 family. In terms of assembly, part of the 30S ribosomal subunit. Contacts proteins S5 and S12.

In terms of biological role, one of the primary rRNA binding proteins, it binds directly to 16S rRNA central domain where it helps coordinate assembly of the platform of the 30S subunit. This Geobacillus kaustophilus (strain HTA426) protein is Small ribosomal subunit protein uS8.